The primary structure comprises 182 residues: MSESSLPSWHGTTILCLRKDGRVVIAGDGQVSLGATVIKGNARKVRKVGGGSILVGFAGATADAFTLLERLEAKLEKHPGQLTRACVELAKDWRTDRYLRRLEAMMAVADKDVSLVLTGQGDVLEPEDGIIGIGSGGNYALAAARALIDIDGLDAETIARKAMAIAAGICVYTNGNMIVESL.

The active site involves Thr12. Positions 167, 170, and 173 each coordinate Na(+).

It belongs to the peptidase T1B family. HslV subfamily. A double ring-shaped homohexamer of HslV is capped on each side by a ring-shaped HslU homohexamer. The assembly of the HslU/HslV complex is dependent on binding of ATP.

Its subcellular location is the cytoplasm. The enzyme catalyses ATP-dependent cleavage of peptide bonds with broad specificity.. Allosterically activated by HslU binding. Functionally, protease subunit of a proteasome-like degradation complex believed to be a general protein degrading machinery. This Paramagnetospirillum magneticum (strain ATCC 700264 / AMB-1) (Magnetospirillum magneticum) protein is ATP-dependent protease subunit HslV.